We begin with the raw amino-acid sequence, 555 residues long: Branched-chain-amino-acid aminotransferase-like protein 1 (555 aa).

This sequence belongs to the class-IV pyridoxal-phosphate-dependent aminotransferase family.

This is Branched-chain-amino-acid aminotransferase-like protein 1 from Arabidopsis thaliana (Mouse-ear cress).